The primary structure comprises 326 residues: Sulfate/thiosulfate import ATP-binding protein CysA (326 aa).

The region spanning 3–237 is the ABC transporter domain; that stretch reads IEVRNVSKNF…PSNDFVYHFL (235 aa). 35 to 42 is a binding site for ATP; the sequence is GPSGCGKT.

The protein belongs to the ABC transporter superfamily. Sulfate/tungstate importer (TC 3.A.1.6) family. As to quaternary structure, the complex is composed of two ATP-binding proteins (CysA), two transmembrane proteins (CysT and CysW) and a solute-binding protein (CysP).

Its subcellular location is the cell inner membrane. The enzyme catalyses sulfate(out) + ATP + H2O = sulfate(in) + ADP + phosphate + H(+). It carries out the reaction thiosulfate(out) + ATP + H2O = thiosulfate(in) + ADP + phosphate + H(+). Part of the ABC transporter complex CysAWTP involved in sulfate/thiosulfate import. Responsible for energy coupling to the transport system. This chain is Sulfate/thiosulfate import ATP-binding protein CysA, found in Pseudomonas syringae pv. tomato (strain ATCC BAA-871 / DC3000).